A 119-amino-acid polypeptide reads, in one-letter code: uncharacterized protein (119 aa).

Transmembrane regions (helical) follow at residues 7 to 27 (ILHN…LLLV) and 32 to 52 (YFFE…FLML).

The protein resides in the membrane. This is an uncharacterized protein from Saccharomyces cerevisiae (strain ATCC 204508 / S288c) (Baker's yeast).